The chain runs to 110 residues: UPF0060 membrane protein Haur_1798 (110 aa).

4 helical membrane-spanning segments follow: residues valine 7–tryptophan 27, serine 33–leucine 53, valine 63–aspartate 83, and glutamine 89–proline 109.

This sequence belongs to the UPF0060 family.

It localises to the cell membrane. This chain is UPF0060 membrane protein Haur_1798, found in Herpetosiphon aurantiacus (strain ATCC 23779 / DSM 785 / 114-95).